The chain runs to 551 residues: Cytochrome c lysine N-methyltransferase 1 (551 aa).

In terms of domain architecture, SET spans 46 to 273 (DKIELLRVSS…PNTEVLITYK (228 aa)). The tract at residues 184–288 (IELLRQIYSA…LAMITKYGFD (105 aa)) is SET-like.

Belongs to the class V-like SAM-binding methyltransferase superfamily.

The protein localises to the cytoplasm. The protein resides in the cytosol. It carries out the reaction L-lysyl-[cytochrome c] + S-adenosyl-L-methionine = N(6)-methyl-L-lysyl-[cytochrome c] + S-adenosyl-L-homocysteine + H(+). Methyltransferase which mediates trimethylation of cytochrome c (CYC1). The chain is Cytochrome c lysine N-methyltransferase 1 (CTM1) from Candida glabrata (strain ATCC 2001 / BCRC 20586 / JCM 3761 / NBRC 0622 / NRRL Y-65 / CBS 138) (Yeast).